The primary structure comprises 330 residues: Stomatin-1 (330 aa).

The segment covering 1 to 19 (MQPSETVEMQEMAQPSGQQ) has biased composition (polar residues). The segment at 1–27 (MQPSETVEMQEMAQPSGQQRDVEARVQ) is disordered. A helical transmembrane segment spans residues 42 to 62 (MFCIAMSYVLIFLTFPVSVFM).

Belongs to the band 7/mec-2 family.

Its subcellular location is the membrane. The polypeptide is Stomatin-1 (sto-1) (Caenorhabditis elegans).